Here is a 466-residue protein sequence, read N- to C-terminus: Probable agmatine/putrescine antiporter AguD (466 aa).

The next 12 membrane-spanning stretches (helical) occupy residues 8–28 (FSLF…EAAA), 30–50 (VAAI…AFLL), 85–105 (ASWF…VLCP), 120–140 (ISLL…LYPV), 144–164 (VWIL…LGGL), 192–212 (LSFI…CTFA), 226–246 (IIIG…GIGV), 273–293 (WFIS…MVSW), 325–345 (WGAA…APLL), 350–370 (LFWS…IPVF), 398–418 (VYMA…AIPL), and 426–446 (TEQL…ELII).

Belongs to the amino acid-polyamine-organocation (APC) superfamily. Glutamate:GABA antiporter (GGA) (TC 2.A.3.7) family.

The protein localises to the cell membrane. Probably catalyzes agmatine/putrescine exchange. This Lactococcus lactis subsp. lactis (strain IL1403) (Streptococcus lactis) protein is Probable agmatine/putrescine antiporter AguD.